Here is a 465-residue protein sequence, read N- to C-terminus: MTSTDGILAGKYPAKAHARRVVEYLRQNGFQGDGVLYLEAQKTRMIEDNDSEQPFRQRRFFFYLSGCLLPDAHLTYHISTDKLTLFIPPLDPESVIWSGLPLSPAQAKELYDVDEVLYTTDVNPTLAHLASKVGFVFAIDGQISDDVSLKSFPDTDKVALKTAIEECRAVKDAYEVAMIRKANDVTSQAHVAVLKAAKSATNERELEAAFIGTCIAQGCREMAYHPIVASGTSSATLHYVNNDEPLIDSSTNKKKLNLLLDAAGEYKAYCADVTRTFPLSGKFSPESREIYDIVLEMQTESLAMLKEGVLWEDVHITAHRVAIKGLLKLGILRGSEEELLEKRVSVAFFPHGLGHYLGMDTHDTGGHANYADKDKMFQYLRVRGKLPAGSVITVEPGVYFCRFIIEPYLKDSELSKYIDADVLEKYWEVGGVRIEDNIHITKEGHENLTTAPKTADQVELMINGS.

Mn(2+) is bound by residues Asp-261, Asp-272, Glu-395, and Glu-435.

It belongs to the peptidase M24B family. It depends on Mn(2+) as a cofactor.

The catalysed reaction is Release of any N-terminal amino acid, including proline, that is linked to proline, even from a dipeptide or tripeptide.. Functionally, catalyzes the removal of a penultimate prolyl residue from the N-termini of peptides. This is Probable Xaa-Pro aminopeptidase pepP (pepP) from Talaromyces marneffei (strain ATCC 18224 / CBS 334.59 / QM 7333) (Penicillium marneffei).